Consider the following 298-residue polypeptide: Acetylglutamate kinase (298 aa).

Substrate contacts are provided by residues 73–74, Arg-95, and Asn-188; that span reads GG.

Belongs to the acetylglutamate kinase family. ArgB subfamily.

It localises to the cytoplasm. It catalyses the reaction N-acetyl-L-glutamate + ATP = N-acetyl-L-glutamyl 5-phosphate + ADP. The protein operates within amino-acid biosynthesis; L-arginine biosynthesis; N(2)-acetyl-L-ornithine from L-glutamate: step 2/4. In terms of biological role, catalyzes the ATP-dependent phosphorylation of N-acetyl-L-glutamate. The sequence is that of Acetylglutamate kinase from Nostoc punctiforme (strain ATCC 29133 / PCC 73102).